Here is a 272-residue protein sequence, read N- to C-terminus: HMP-PP phosphatase (272 aa).

D8 serves as the catalytic Nucleophile. Mg(2+)-binding residues include D8, D10, and D212.

Belongs to the HAD-like hydrolase superfamily. Cof family. Requires Mg(2+) as cofactor.

It catalyses the reaction 4-amino-2-methyl-5-(diphosphooxymethyl)pyrimidine + H2O = 4-amino-2-methyl-5-(phosphooxymethyl)pyrimidine + phosphate + H(+). Catalyzes the hydrolysis of 4-amino-2-methyl-5-hydroxymethylpyrimidine pyrophosphate (HMP-PP) to 4-amino-2-methyl-5-hydroxymethylpyrimidine phosphate (HMP-P). In Salmonella arizonae (strain ATCC BAA-731 / CDC346-86 / RSK2980), this protein is HMP-PP phosphatase.